Here is a 539-residue protein sequence, read N- to C-terminus: Putative cysteine ligase BshC (539 aa).

ADP contacts are provided by residues serine 146 and 384–386; that span reads ERH. Residues 455 to 475 adopt a coiled-coil conformation; it reads LLKNAAFIQDQLQFLERTVMK. ADP is bound by residues 490–493, tryptophan 506, and tyrosine 510; that span reads RIQN.

This sequence belongs to the BshC family. In terms of assembly, homodimer in solution.

Functionally, involved in bacillithiol (BSH) biosynthesis. May catalyze the last step of the pathway, the addition of cysteine to glucosamine malate (GlcN-Mal) to generate BSH. This chain is Putative cysteine ligase BshC, found in Bacillus subtilis (strain 168).